Here is a 292-residue protein sequence, read N- to C-terminus: 4-hydroxybenzoate solanesyltransferase (292 aa).

The next 9 membrane-spanning stretches (helical) occupy residues 28–48 (LILM…LPPL), 49–69 (PLLG…CVVN), 97–117 (VGIG…FYLT), 118–138 (PLSF…PGAK), 140–160 (VFPV…LISW), 172–192 (WVLW…YAMA), 217–237 (VGIF…ILML), 239–259 (PLYW…YIQL), and 272–292 (IFGQ…LGWL).

This sequence belongs to the UbiA prenyltransferase family. The cofactor is Mg(2+).

The protein resides in the cell inner membrane. The enzyme catalyses all-trans-nonaprenyl diphosphate + 4-hydroxybenzoate = 4-hydroxy-3-(all-trans-nonaprenyl)benzoate + diphosphate. In terms of biological role, catalyzes the prenylation of para-hydroxybenzoate (PHB) with an all-trans polyprenyl group. Mediates the second step in the final reaction sequence of plastoquinone-9 (PQ-9) biosynthesis, which is the condensation of the polyisoprenoid side chain with PHB, generating the first membrane-bound Q intermediate 4-hydroxy-3-solanesylbenzoate. This is 4-hydroxybenzoate solanesyltransferase from Synechocystis sp. (strain ATCC 27184 / PCC 6803 / Kazusa).